The sequence spans 592 residues: NADH-quinone oxidoreductase subunit C/D (592 aa).

The segment at 1-183 (MLTEFNSIPA…GPYILTEEKE (183 aa)) is NADH dehydrogenase I subunit C. The segment at 207–592 (DFMFLNLGPN…IDFVMADVDR (386 aa)) is NADH dehydrogenase I subunit D.

This sequence in the N-terminal section; belongs to the complex I 30 kDa subunit family. It in the C-terminal section; belongs to the complex I 49 kDa subunit family. In terms of assembly, NDH-1 is composed of 13 different subunits. Subunits NuoB, CD, E, F, and G constitute the peripheral sector of the complex.

The protein resides in the cell inner membrane. The catalysed reaction is a quinone + NADH + 5 H(+)(in) = a quinol + NAD(+) + 4 H(+)(out). Functionally, NDH-1 shuttles electrons from NADH, via FMN and iron-sulfur (Fe-S) centers, to quinones in the respiratory chain. The immediate electron acceptor for the enzyme in this species is believed to be ubiquinone. Couples the redox reaction to proton translocation (for every two electrons transferred, four hydrogen ions are translocated across the cytoplasmic membrane), and thus conserves the redox energy in a proton gradient. This is NADH-quinone oxidoreductase subunit C/D from Acidiphilium cryptum (strain JF-5).